Here is a 62-residue protein sequence, read N- to C-terminus: MDPGECTCMSGGICICGDNCKCTTCNCKTCRKSCCPCCPPGCAKCAQGCICKGGSDKCSCCA.

A divalent metal cation-binding residues include C6, C8, C14, C16, C20, C22, C25, C27, C30, C34, C35, C37, C38, C42, C45, C49, C51, C58, C60, and C61.

This sequence belongs to the metallothionein superfamily. Type 1 family.

Seems to bind zinc and copper. Could play a special role in regulating zinc metabolism during the differentiation of stratified epithelia. This Canis lupus familiaris (Dog) protein is Metallothionein-4 (MT4).